A 224-amino-acid chain; its full sequence is 2-C-methyl-D-erythritol 4-phosphate cytidylyltransferase (224 aa).

It belongs to the IspD/TarI cytidylyltransferase family. IspD subfamily.

The enzyme catalyses 2-C-methyl-D-erythritol 4-phosphate + CTP + H(+) = 4-CDP-2-C-methyl-D-erythritol + diphosphate. The protein operates within isoprenoid biosynthesis; isopentenyl diphosphate biosynthesis via DXP pathway; isopentenyl diphosphate from 1-deoxy-D-xylulose 5-phosphate: step 2/6. In terms of biological role, catalyzes the formation of 4-diphosphocytidyl-2-C-methyl-D-erythritol from CTP and 2-C-methyl-D-erythritol 4-phosphate (MEP). The polypeptide is 2-C-methyl-D-erythritol 4-phosphate cytidylyltransferase (Saccharopolyspora erythraea (strain ATCC 11635 / DSM 40517 / JCM 4748 / NBRC 13426 / NCIMB 8594 / NRRL 2338)).